A 476-amino-acid chain; its full sequence is Glutamyl-tRNA(Gln) amidotransferase subunit A (476 aa).

Active-site charge relay system residues include K77 and S152. S176 serves as the catalytic Acyl-ester intermediate.

The protein belongs to the amidase family. GatA subfamily. Heterotrimer of A, B and C subunits.

It carries out the reaction L-glutamyl-tRNA(Gln) + L-glutamine + ATP + H2O = L-glutaminyl-tRNA(Gln) + L-glutamate + ADP + phosphate + H(+). In terms of biological role, allows the formation of correctly charged Gln-tRNA(Gln) through the transamidation of misacylated Glu-tRNA(Gln) in organisms which lack glutaminyl-tRNA synthetase. The reaction takes place in the presence of glutamine and ATP through an activated gamma-phospho-Glu-tRNA(Gln). The sequence is that of Glutamyl-tRNA(Gln) amidotransferase subunit A from Acidobacterium capsulatum (strain ATCC 51196 / DSM 11244 / BCRC 80197 / JCM 7670 / NBRC 15755 / NCIMB 13165 / 161).